The following is a 399-amino-acid chain: Enoyl-[acyl-carrier-protein] reductase [NADH] (399 aa).

Residues 48–53, 74–75, 111–112, and 139–140 each bind NAD(+); these read GASTGY, FE, DA, and LA. Tyr225 provides a ligand contact to substrate. Tyr235 serves as the catalytic Proton donor. Residues Lys244 and 274-276 contribute to the NAD(+) site; that span reads VVT.

Belongs to the TER reductase family. In terms of assembly, monomer.

It carries out the reaction a 2,3-saturated acyl-[ACP] + NAD(+) = a (2E)-enoyl-[ACP] + NADH + H(+). The protein operates within lipid metabolism; fatty acid biosynthesis. Involved in the final reduction of the elongation cycle of fatty acid synthesis (FAS II). Catalyzes the reduction of a carbon-carbon double bond in an enoyl moiety that is covalently linked to an acyl carrier protein (ACP). The polypeptide is Enoyl-[acyl-carrier-protein] reductase [NADH] (Yersinia enterocolitica serotype O:8 / biotype 1B (strain NCTC 13174 / 8081)).